Consider the following 76-residue polypeptide: uncharacterized protein (76 aa).

This is an uncharacterized protein from Methanocaldococcus jannaschii (strain ATCC 43067 / DSM 2661 / JAL-1 / JCM 10045 / NBRC 100440) (Methanococcus jannaschii).